Reading from the N-terminus, the 458-residue chain is Argininosuccinate lyase (458 aa).

The protein belongs to the lyase 1 family. Argininosuccinate lyase subfamily.

The protein localises to the cytoplasm. The enzyme catalyses 2-(N(omega)-L-arginino)succinate = fumarate + L-arginine. It participates in amino-acid biosynthesis; L-arginine biosynthesis; L-arginine from L-ornithine and carbamoyl phosphate: step 3/3. This chain is Argininosuccinate lyase, found in Salmonella choleraesuis (strain SC-B67).